The primary structure comprises 162 residues: Transcriptional repressor NrdR (162 aa).

The tract at residues 1 to 21 (MNCPDCGDEQTRVIDTETSAD) is disordered. Residues 3–34 (CPDCGDEQTRVIDTETSADGTSVRRRRECQRC) fold into a zinc finger. Positions 49 to 139 (LQVKKRNGTI…VYKAFSEPQE (91 aa)) constitute an ATP-cone domain.

Belongs to the NrdR family. The cofactor is Zn(2+).

Its function is as follows. Negatively regulates transcription of bacterial ribonucleotide reductase nrd genes and operons by binding to NrdR-boxes. The polypeptide is Transcriptional repressor NrdR (Halorubrum lacusprofundi (strain ATCC 49239 / DSM 5036 / JCM 8891 / ACAM 34)).